Here is a 275-residue protein sequence, read N- to C-terminus: tRNA pseudouridine synthase A (275 aa).

D56 acts as the Nucleophile in catalysis. Position 110 (Y110) interacts with substrate.

It belongs to the tRNA pseudouridine synthase TruA family.

It catalyses the reaction uridine(38/39/40) in tRNA = pseudouridine(38/39/40) in tRNA. Its function is as follows. Formation of pseudouridine at positions 38, 39 and 40 in the anticodon stem and loop of transfer RNAs. In Haloarcula marismortui (strain ATCC 43049 / DSM 3752 / JCM 8966 / VKM B-1809) (Halobacterium marismortui), this protein is tRNA pseudouridine synthase A.